Consider the following 175-residue polypeptide: Crossover junction endodeoxyribonuclease RuvC (175 aa).

Residues aspartate 8, glutamate 69, and aspartate 141 contribute to the active site. Mg(2+)-binding residues include aspartate 8, glutamate 69, and aspartate 141.

This sequence belongs to the RuvC family. Homodimer which binds Holliday junction (HJ) DNA. The HJ becomes 2-fold symmetrical on binding to RuvC with unstacked arms; it has a different conformation from HJ DNA in complex with RuvA. In the full resolvosome a probable DNA-RuvA(4)-RuvB(12)-RuvC(2) complex forms which resolves the HJ. Requires Mg(2+) as cofactor.

The protein resides in the cytoplasm. The catalysed reaction is Endonucleolytic cleavage at a junction such as a reciprocal single-stranded crossover between two homologous DNA duplexes (Holliday junction).. In terms of biological role, the RuvA-RuvB-RuvC complex processes Holliday junction (HJ) DNA during genetic recombination and DNA repair. Endonuclease that resolves HJ intermediates. Cleaves cruciform DNA by making single-stranded nicks across the HJ at symmetrical positions within the homologous arms, yielding a 5'-phosphate and a 3'-hydroxyl group; requires a central core of homology in the junction. The consensus cleavage sequence is 5'-(A/T)TT(C/G)-3'. Cleavage occurs on the 3'-side of the TT dinucleotide at the point of strand exchange. HJ branch migration catalyzed by RuvA-RuvB allows RuvC to scan DNA until it finds its consensus sequence, where it cleaves and resolves the cruciform DNA. The chain is Crossover junction endodeoxyribonuclease RuvC from Colwellia psychrerythraea (strain 34H / ATCC BAA-681) (Vibrio psychroerythus).